A 922-amino-acid chain; its full sequence is Translation initiation factor IF-2 (922 aa).

The disordered stretch occupies residues 33–310; the sequence is KTASSTVQPP…SKRQKRNEYE (278 aa). The segment covering 75–87 has biased composition (low complexity); that stretch reads PAAKAAPKAAAKP. 2 stretches are compositionally biased toward pro residues: residues 88–98 and 140–150; these read GPKPGPKPGPQ and TPKPGAKPGPK. 2 stretches are compositionally biased toward low complexity: residues 151-169 and 202-211; these read PGGA…GRAP and PGSRPGGAKK. 2 stretches are compositionally biased toward gly residues: residues 215 to 225 and 248 to 292; these read KPGGAKQGGGR and FGGG…GRPG. A compositionally biased stretch (basic residues) spans 296 to 305; sequence RKGRKSKRQK. A tr-type G domain is found at 418–590; that stretch reads QRPPVVTVMG…VLLTADASLD (173 aa). Residues 427–434 form a G1 region; the sequence is GHVDHGKT. Residue 427–434 coordinates GTP; the sequence is GHVDHGKT. Residues 452 to 456 form a G2 region; that stretch reads GITQH. The segment at 477–480 is G3; the sequence is DTPG. GTP contacts are provided by residues 477-481 and 531-534; these read DTPGH and NKID. Residues 531-534 are G4; that stretch reads NKID. The segment at 567-569 is G5; the sequence is SAK.

This sequence belongs to the TRAFAC class translation factor GTPase superfamily. Classic translation factor GTPase family. IF-2 subfamily.

It localises to the cytoplasm. One of the essential components for the initiation of protein synthesis. Protects formylmethionyl-tRNA from spontaneous hydrolysis and promotes its binding to the 30S ribosomal subunits. Also involved in the hydrolysis of GTP during the formation of the 70S ribosomal complex. This Corynebacterium jeikeium (strain K411) protein is Translation initiation factor IF-2.